Consider the following 578-residue polypeptide: Phosphoenolpyruvate-protein phosphotransferase (578 aa).

Residue histidine 195 is the Tele-phosphohistidine intermediate of the active site. Phosphoenolpyruvate contacts are provided by arginine 302 and arginine 338. Mg(2+)-binding residues include glutamate 437 and aspartate 461. Phosphoenolpyruvate contacts are provided by residues 460–461 (ND) and arginine 471. The active-site Proton donor is cysteine 508.

This sequence belongs to the PEP-utilizing enzyme family. Homodimer. Requires Mg(2+) as cofactor.

It localises to the cytoplasm. The catalysed reaction is L-histidyl-[protein] + phosphoenolpyruvate = N(pros)-phospho-L-histidyl-[protein] + pyruvate. In terms of biological role, general (non sugar-specific) component of the phosphoenolpyruvate-dependent sugar phosphotransferase system (sugar PTS). This major carbohydrate active-transport system catalyzes the phosphorylation of incoming sugar substrates concomitantly with their translocation across the cell membrane. Enzyme I transfers the phosphoryl group from phosphoenolpyruvate (PEP) to the phosphoryl carrier protein (HPr). This is Phosphoenolpyruvate-protein phosphotransferase (ptsI) from Geobacillus stearothermophilus (Bacillus stearothermophilus).